A 311-amino-acid polypeptide reads, in one-letter code: MNVKPSLDELFERRINFPDFEPQERLARLVGLDEHKDRLSKILGLLVNPYGIQEWAKKYHPDARAAVDTVLRRPPLVVLAGDVGSGKTELAETIGDAVARQEDIDITLYPLSLATRGQGRVGEMTQLVSAAFDYTIEAADKLKNTNGKARGAVLLLIDEADALAQSRENAQMHHEDRAGVNAFIRGIDRIANQKLPAAVLMCTNRLKALDPAVQRRAAEILTFSRPNDEQRHYLLHSKLTGLGLNSTAVEELVRLTGPRDPNSPGFTFSDITQRLIPSIILAAYPYNAVSVHSALQVVNKMTPTPAFIDRQ.

ATP contacts are provided by residues Gly-84–Glu-89 and Arg-215–Arg-216.

This sequence belongs to the AAA ATPase family. Homohexamer. Forms a 1:1:6 CdnC:Cap7:Cap6 complex.

Its function is as follows. Regulates complex assembly in a CBASS antivirus system. CBASS (cyclic oligonucleotide-based antiphage signaling system) provides immunity against bacteriophage. The CD-NTase protein synthesizes cyclic nucleotides in response to infection; these serve as specific second messenger signals. The signals activate a diverse range of effectors, leading to bacterial cell death and thus abortive phage infection. A type III-C(AAA) CBASS system. Functionally, binds and disassembles an active CdnC:Cap7 (Cap7 is also called HORMA) complex, inhibiting the complex's ability to synthesize cyclic nucleotide second messengers. An AAA+-ATPase remodeler, in the absence of foreign threat Cap6 (also called Trip13) probably maintains the Cap7 protein in its open, inactive state. Once activated (presumably by a bacteriophage protein) Cap7 binds to and activates its cognate CD-NTase (CdnC in this bacteria) to synthesize cAAA, a cyclic nucleotide second messenger. cAAA activates the NucC endonuclease which degrades all DNA in the infected cell, causing cell death and abortive phage infection. In terms of biological role, protects E.coli strain JP313 against bacteriophage lambda cI- infection. When the cdnC-cap7-cap6-nucC operon is transformed into a susceptible E.coli strain it confers bacteriophage lambda cI- immunity. Mutations in the sensor (Cap7 also called HORMA) or effector proteins (CdnC, NucC) but not the disassembly protein (Cap6 also called Trip13) no longer confer immunity. The presence of the intact operon leads to culture collapse and cell death, which occurs before the phage has finished its replication cycle, thus protecting non-infected bacteria by aborting the phage infection and preventing its propagation. The sequence is that of CD-NTase-associated protein 6 from Escherichia coli (strain MS 115-1).